Consider the following 492-residue polypeptide: UPF0652 protein C22H10.08 (492 aa).

This sequence belongs to the UPF0652 family.

The protein localises to the cytoplasm. It is found in the nucleus. The sequence is that of UPF0652 protein C22H10.08 from Schizosaccharomyces pombe (strain 972 / ATCC 24843) (Fission yeast).